A 387-amino-acid polypeptide reads, in one-letter code: EP300-interacting inhibitor of differentiation 3 (387 aa).

Residues M1 to A19 are compositionally biased toward basic and acidic residues. The segment at M1–C77 is disordered. Acidic residues predominate over residues E32–S72.

The protein belongs to the NSE4 family. Component of the SMC5-SMC6 complex which consists at least of SMC5, SMC6, NSMCE2, NSMCE1, NSMCE4A or EID3 and NSMCE3. NSMCE1, NSMCE4A or EID3 and NSMCE3 probably form a subcomplex that bridges the head domains of the SMC5:SMC6 heterodimer. Homodimer, and heterodimer with EID2. Interacts with the C-terminal region of CREBBP.

The protein localises to the nucleus. Its subcellular location is the cytoplasm. It is found in the chromosome. The protein resides in the telomere. Tissue-specific component of the SMC5-SMC6 complex, a complex involved in repair of DNA double-strand breaks by homologous recombination. The complex may promote sister chromatid homologous recombination by recruiting the SMC1-SMC3 cohesin complex to double-strand breaks. The complex is required for telomere maintenance via recombination and mediates sumoylation of shelterin complex (telosome) components. In terms of biological role, acts as a repressor of nuclear receptor-dependent transcription possibly by interfering with CREBBP-dependent coactivation. May function as a coinhibitor of other CREBBP/EP300-dependent transcription factors. In Rattus norvegicus (Rat), this protein is EP300-interacting inhibitor of differentiation 3.